Reading from the N-terminus, the 113-residue chain is Putative pterin-4-alpha-carbinolamine dehydratase (113 aa).

It belongs to the pterin-4-alpha-carbinolamine dehydratase family.

The catalysed reaction is (4aS,6R)-4a-hydroxy-L-erythro-5,6,7,8-tetrahydrobiopterin = (6R)-L-erythro-6,7-dihydrobiopterin + H2O. The polypeptide is Putative pterin-4-alpha-carbinolamine dehydratase (Bordetella bronchiseptica (strain ATCC BAA-588 / NCTC 13252 / RB50) (Alcaligenes bronchisepticus)).